The following is a 226-amino-acid chain: Tyramine N-feruloyltransferase 10/30 (226 aa).

The important in binding site and for catalytic activity stretch occupies residues 29–45; that stretch reads HIYKLFYQIHEYHNYTH. Residues 72–222 enclose the N-acetyltransferase domain; it reads VLLLEVSPTP…VGDALQKYAD (151 aa).

This sequence belongs to the acetyltransferase family. As to quaternary structure, homodimer.

It is found in the cytoplasm. The enzyme catalyses tyramine + (E)-feruloyl-CoA = N-[(E)-feruloyl]tyramine + CoA + H(+). Its activity is regulated as follows. Inhibited by (2-hydroxyphenyl)amino sulfinyl acetic acid 1,1-dimethylethyl ester, by DEPC and by N-ethylmaleimide. Its function is as follows. Synthesizes amides which are involved in stress response in the cell wall. Catalyzes the synthesis of hydroxycinnamic acid amides from hydroxycinnamoyl-CoA thioesters and various hydroxyphenylethylamines such as 4-coumaroyl-CoA and sinapoyl-CoA. The sequence is that of Tyramine N-feruloyltransferase 10/30 (THT10) from Nicotiana tabacum (Common tobacco).